A 385-amino-acid polypeptide reads, in one-letter code: MTTTVFTSESVSEGHPDKIADQISDAMLDAIMKQDPKARVACETFVKTGMVMLGGEITTSAWVDQEELVRQVVNDIGYNHGDLGFDGETCAVLSSIGKQSPEIAQGVDEYEDHEQGAGDQGLMFGYASNETDVLMPAPIYFAHRLMEKQAELRKAGKLDWLRPDAKSQVTLRYEDGQPVAVDAVVLSTQHSPEVDNKDLHEAVMEEIIKPVLPEGWLHSGTQYHINPTGRFVIGGPVGDAGLTGRKIIVDTYGGMARHGGGAFSGKDPSKVDRSAAYAGRYVAKNIVAAGLADKCEIQVSYAIGVAAPTSISIETFGTEKVAVSLIEKLVREHFDLRPKGLIAMLDLYRPIYQKTASYGHFGRELPEFTWEKTDKAAALRADAGL.

Histidine 15 serves as a coordination point for ATP. Aspartate 17 serves as a coordination point for Mg(2+). Glutamate 43 contributes to the K(+) binding site. L-methionine is bound by residues glutamate 56 and glutamine 99. A flexible loop region spans residues 99-109 (QSPEIAQGVDE). Residues 164–166 (DAK), 230–231 (RF), aspartate 239, 245–246 (RK), alanine 262, and lysine 266 contribute to the ATP site. Aspartate 239 is an L-methionine binding site. Position 270 (lysine 270) interacts with L-methionine.

This sequence belongs to the AdoMet synthase family. As to quaternary structure, homotetramer; dimer of dimers. It depends on Mg(2+) as a cofactor. K(+) serves as cofactor.

The protein localises to the cytoplasm. It catalyses the reaction L-methionine + ATP + H2O = S-adenosyl-L-methionine + phosphate + diphosphate. The protein operates within amino-acid biosynthesis; S-adenosyl-L-methionine biosynthesis; S-adenosyl-L-methionine from L-methionine: step 1/1. In terms of biological role, catalyzes the formation of S-adenosylmethionine (AdoMet) from methionine and ATP. The overall synthetic reaction is composed of two sequential steps, AdoMet formation and the subsequent tripolyphosphate hydrolysis which occurs prior to release of AdoMet from the enzyme. This chain is S-adenosylmethionine synthase, found in Hydrogenovibrio crunogenus (strain DSM 25203 / XCL-2) (Thiomicrospira crunogena).